Reading from the N-terminus, the 319-residue chain is 4-diphosphocytidyl-2-C-methyl-D-erythritol kinase (319 aa).

The active site involves Lys-21. Residue 106–116 participates in ATP binding; the sequence is PIGAGLAGGSS. Asp-148 is a catalytic residue.

The protein belongs to the GHMP kinase family. IspE subfamily.

The enzyme catalyses 4-CDP-2-C-methyl-D-erythritol + ATP = 4-CDP-2-C-methyl-D-erythritol 2-phosphate + ADP + H(+). Its pathway is isoprenoid biosynthesis; isopentenyl diphosphate biosynthesis via DXP pathway; isopentenyl diphosphate from 1-deoxy-D-xylulose 5-phosphate: step 3/6. Its function is as follows. Catalyzes the phosphorylation of the position 2 hydroxy group of 4-diphosphocytidyl-2C-methyl-D-erythritol. The chain is 4-diphosphocytidyl-2-C-methyl-D-erythritol kinase from Prochlorococcus marinus (strain MIT 9313).